Here is a 578-residue protein sequence, read N- to C-terminus: Malonate--CoA ligase ACSF3, mitochondrial (578 aa).

The transit peptide at 1-19 (MRVGAFLGRSLFSCSHVRG) directs the protein to the mitochondrion. 205–213 (TSGTTGRPK) is a binding site for ATP. Positions 394–413 (QNPRKEGTSYTTHAQGDSTG) are disordered. ATP-binding residues include Asp459, Arg473, and Lys565.

This sequence belongs to the ATP-dependent AMP-binding enzyme family.

It is found in the mitochondrion. It carries out the reaction tetracosanoate + ATP + CoA = tetracosanoyl-CoA + AMP + diphosphate. It catalyses the reaction malonate + ATP + CoA = malonyl-CoA + AMP + diphosphate. Catalyzes the initial reaction in intramitochondrial fatty acid synthesis, by activating malonate and methylmalonate, but not acetate, into their respective CoA thioester. May have some preference toward very-long-chain substrates. In Xenopus laevis (African clawed frog), this protein is Malonate--CoA ligase ACSF3, mitochondrial.